A 638-amino-acid chain; its full sequence is MGKIIGIDLGTTNSCVSVFEGNEPVVIANSEGKRTTPSIVAFVDGGERKVGDPAKRQAITNPQRTIFSIKRFMGETWDQVQKETARVPYKVVKGDNNTPRVDIDGRLYTPQEISAMILQKMKKTAEDYLGQEVTEAVITVPAYFSDSQRQATKEAGQIAGLEVKRIVNEPTAAALAYGLDKAHKDMKIAVFDLGGGTFDISILEFGGGVFEVLSTNGDTHLGGDDFDQVIIDWLVQEFKNDEGADLTKDPMAMQRLKEAAEKAKIELSSSTSTEINLPYIMPVDGMPKHLVKTLTRAKFEALAHNLIQACLEPCKKAMSDAGLSNSDIDEVILVGGSSRIPAVQELVEKFFGKTPSKGVNPDEVVAVGAAVQGAVLTDEIKGVVLLDVTPLSMGIETLGGVMTKLIDANTTIPARKSETFSTAADNQTEVTIHVLQGERPMAAQNKSIGQFNLTGIAPARRGVPQIEVTFDIDANGILKVSAKDKATGKEQAIRIEASSGLSKEEIEKMKAEAEANAEADKKEREKIDKLNQADSMIFSTENQLKELGDKLPADKKAPIEAALQKLKDAHKAQDLSAIDTAMAELNTAFQAASAEMYAQSGAQGGAQAGPGAGAGQQANQGSSNNKEDIQDADFEEVK.

T197 is modified (phosphothreonine; by autocatalysis). Positions 600–638 are disordered; it reads SGAQGGAQAGPGAGAGQQANQGSSNNKEDIQDADFEEVK. Gly residues predominate over residues 602–614; it reads AQGGAQAGPGAGA. Over residues 615-624 the composition is skewed to low complexity; the sequence is GQQANQGSSN. A compositionally biased stretch (basic and acidic residues) spans 625 to 638; it reads NKEDIQDADFEEVK.

This sequence belongs to the heat shock protein 70 family.

In terms of biological role, acts as a chaperone. This chain is Chaperone protein DnaK, found in Phocaeicola vulgatus (strain ATCC 8482 / DSM 1447 / JCM 5826 / CCUG 4940 / NBRC 14291 / NCTC 11154) (Bacteroides vulgatus).